We begin with the raw amino-acid sequence, 506 residues long: Maturase K (506 aa).

This sequence belongs to the intron maturase 2 family. MatK subfamily.

The protein localises to the plastid. Its subcellular location is the chloroplast. Usually encoded in the trnK tRNA gene intron. Probably assists in splicing its own and other chloroplast group II introns. The polypeptide is Maturase K (Sullivantia sullivantii (Sullivant's coolwort)).